Here is a 450-residue protein sequence, read N- to C-terminus: Cyclin-A2-3 (450 aa).

Disordered stretches follow at residues 18–53 (ALRA…NKRK) and 75–94 (NSKQ…SQLA). A compositionally biased stretch (polar residues) spans 23 to 34 (EVTSTTQNQQRV).

The protein belongs to the cyclin family. Cyclin AB subfamily. As to quaternary structure, interacts with CDKA-1. Interacts with SAMBA.

It localises to the nucleus. Negatively regulates endocycles and acts as a regulator of ploidy levels in endoreduplication. Promotes divisions in the guard cells (GCs) after the guard mother cells (GMC) symmetric division. This chain is Cyclin-A2-3 (CYCA2-3), found in Arabidopsis thaliana (Mouse-ear cress).